Consider the following 398-residue polypeptide: Acetate kinase (398 aa).

Asn8 provides a ligand contact to Mg(2+). Lys15 provides a ligand contact to ATP. Arg89 lines the substrate pocket. The active-site Proton donor/acceptor is Asp146. Residues 206 to 210 (HIGNG), 283 to 285 (DMR), and 331 to 335 (GMGEN) each bind ATP. A Mg(2+)-binding site is contributed by Glu383.

It belongs to the acetokinase family. Homodimer. It depends on Mg(2+) as a cofactor. The cofactor is Mn(2+).

It localises to the cytoplasm. It carries out the reaction acetate + ATP = acetyl phosphate + ADP. It functions in the pathway metabolic intermediate biosynthesis; acetyl-CoA biosynthesis; acetyl-CoA from acetate: step 1/2. Catalyzes the formation of acetyl phosphate from acetate and ATP. Can also catalyze the reverse reaction. In Streptococcus pyogenes serotype M12 (strain MGAS2096), this protein is Acetate kinase.